The primary structure comprises 541 residues: Chaperonin GroEL 2 (541 aa).

ATP is bound by residues 30-33 (TLGP), Lys51, 87-91 (DGTTT), Gly415, and Asp496.

It belongs to the chaperonin (HSP60) family. Forms a cylinder of 14 subunits composed of two heptameric rings stacked back-to-back. Interacts with the co-chaperonin GroES.

It is found in the cytoplasm. The enzyme catalyses ATP + H2O + a folded polypeptide = ADP + phosphate + an unfolded polypeptide.. Its function is as follows. Together with its co-chaperonin GroES, plays an essential role in assisting protein folding. The GroEL-GroES system forms a nano-cage that allows encapsulation of the non-native substrate proteins and provides a physical environment optimized to promote and accelerate protein folding. The sequence is that of Chaperonin GroEL 2 from Gluconacetobacter diazotrophicus (strain ATCC 49037 / DSM 5601 / CCUG 37298 / CIP 103539 / LMG 7603 / PAl5).